A 159-amino-acid chain; its full sequence is Phosphoribosylaminoimidazole carboxylase (159 aa).

Residues Ser11, Asp14, Ser38, Lys41, Gly67, and Ser69 each coordinate substrate.

It carries out the reaction 5-amino-1-(5-phospho-D-ribosyl)imidazole-4-carboxylate + H(+) = 5-amino-1-(5-phospho-beta-D-ribosyl)imidazole + CO2. Its pathway is purine metabolism; IMP biosynthesis via de novo pathway; 5-amino-1-(5-phospho-D-ribosyl)imidazole-4-carboxylate from 5-amino-1-(5-phospho-D-ribosyl)imidazole (carboxylase route): step 1/1. In terms of biological role, catalyzes the reversible conversion of 5-aminoimidazole ribonucleotide (AIR) and CO(2) to 4-carboxy-5-aminoimidazole ribonucleotide (CAIR). Does not accept N5-carboxyaminoimidazole ribonucleotide (N5-CAIR) as a substrate. The polypeptide is Phosphoribosylaminoimidazole carboxylase (Treponema denticola (strain ATCC 35405 / DSM 14222 / CIP 103919 / JCM 8153 / KCTC 15104)).